Reading from the N-terminus, the 1420-residue chain is MDQNQQQQQQQQQQQQQQQQQQQQQQQQQQQQQQQQQQQQQQQPPNGMMPMNGEQTTPIIPQNRNISLSLVIHRLVEQSYNSLLGLTEGLPKANDLERKKAIVDYLDGTREKFLRLMVLIKWSEHVPTLTKANNIIDILNLEDSYLREAADLLINTQFSLVNARAPIYDVPTAIDVLTTGTYQRMPTNIKRVIPPPPLKPTQIESALERLNDIIKYKLFISDVPKEFQPITVSDGKAHIFVDDEYEAYLTIDGGSEKSNWVILSLNLFVYSKRNLNGEGPIKVAYDNKMKYVLDRVQNRIISSAQPLFELHNIVHYLCISSQMDILASQVENLKKTILKNNIRCVFGKDQSITVFYWLPEDFNLVGVTQHTLGNLMPNKHTNFKIYIDEHQKIKISHYPPITHPKNENYFKIASLNLETILLQAIELNAYDKVYLLNSLLLDNRITANTTSSSSSSSSNNNNTASPIINRNNNNGKPNLLSTKQSNNPLSRSFHLNDIKLIMSSRFSDENQNDSNGNNDHLPTVLRVMLYGSKFLDITVNFQNGKFSLIKSSNYIEFTNHLEQRLNKDPNEIESIVNVFKLKSLLTCFEEASLFLGLECFNKIPLQMNSSNNSESNQLANELFSDSNFICVSISLAKENNPYYLVISIKATCFTPSFHLLFCKMLPKSTIMTLDSIIKLESDQLNKLLKECPIGSISSSNNTNSNGNGPFQSYISTLLEKIVEASNQKINLLSIQSFLKKENINYYQPSQQDIENNNNNNNNNNNNNNNNNNNNNNNNNNNNNNNNNNNNNNGNNGYKNNGITTTTSIVFLFNEQQIQKISPFLSNHISHQTPITISFKNGFYTLSFTQQRPFEYKKYGSGSNININSFGENNSNENYIYRKGNWIFKYQQTSDWFNSFCNDLMTISKITNISSQLLKQMETLEIYKQLITHLTIKPMSIEFVCFVGSNQTRTNVIMFVEKKTAEIKLSFQPYSNPLLVYLEKDINQSPTNDITNSLRAIINSNDISVYINSLISPLELSFYLPLEILVIPRSICQIRLLYKNLYGIDIKLISHEYCAISDSFYSLNSSKQVRLTSINQLHSFMEQRVSLQALDNPTGHRTSWLLPIKQFQKTISRIFIYLNSLNTLKFAQNLMKPNFQPLVPSNPSSQKFSNDYFIVSFSIRDYTSFDIDVTNKNLENSVPSNEELALFCQYFKKKVQQLNYRSQTIGSCIQMLTLPPKILWEFIRVLLEITGPKFDGYTIEISLNTSSIHSKNKESFFHIPDENQVYFILRYLNSSRTDIIPPDQFTDIPIIYNYNEKSIRYWNKLDSNSTSSSSSSTLPKKSLSIVEEVKQKFVEEVAKLIPDALNASSGKSSPISIFFKSFLPKIKPIFSNPTASTLLLIQQQQQQQQQQQQQQQQQQQQQQIENNNFASASSSIR.

Positions 1-43 form a coiled coil; the sequence is MDQNQQQQQQQQQQQQQQQQQQQQQQQQQQQQQQQQQQQQQQQ. 2 stretches are compositionally biased toward low complexity: residues 1–43 and 449–474; these read MDQN…QQQQ and TTSS…NNNN. Disordered regions lie at residues 1–59, 449–490, 750–799, and 1389–1420; these read MDQN…TTPI, TTSS…NPLS, QQDI…GYKN, and QQQQ…SSIR. Positions 475–490 are enriched in polar residues; that stretch reads GKPNLLSTKQSNNPLS. 2 stretches are compositionally biased toward low complexity: residues 755-795 and 1389-1406; these read NNNN…NGNN and QQQQ…QQQQ. The stretch at 1382–1412 forms a coiled coil; that stretch reads LLIQQQQQQQQQQQQQQQQQQQQQQIENNNF. Residues 1407-1420 are compositionally biased toward polar residues; that stretch reads IENNNFASASSSIR.

It belongs to the Mediator complex subunit 14 family. In terms of assembly, component of the Mediator complex.

It localises to the nucleus. Component of the Mediator complex, a coactivator involved in the regulated transcription of nearly all RNA polymerase II-dependent genes. Mediator functions as a bridge to convey information from gene-specific regulatory proteins to the basal RNA polymerase II transcription machinery. Mediator is recruited to promoters by direct interactions with regulatory proteins and serves as a scaffold for the assembly of a functional preinitiation complex with RNA polymerase II and the general transcription factors. This Dictyostelium discoideum (Social amoeba) protein is Putative mediator of RNA polymerase II transcription subunit 14 (med14).